A 70-amino-acid polypeptide reads, in one-letter code: Large ribosomal subunit protein eL38 (70 aa).

The protein belongs to the eukaryotic ribosomal protein eL38 family.

The polypeptide is Large ribosomal subunit protein eL38 (RpL38) (Anopheles gambiae (African malaria mosquito)).